A 474-amino-acid chain; its full sequence is Glutamate--tRNA ligase (474 aa).

The 'HIGH' region motif lies at 9 to 19 (PSPTGYLHVGG). Residues 240-244 (KLSKR) carry the 'KMSKS' region motif. Lys243 lines the ATP pocket.

Belongs to the class-I aminoacyl-tRNA synthetase family. Glutamate--tRNA ligase type 1 subfamily. As to quaternary structure, monomer.

It localises to the cytoplasm. It catalyses the reaction tRNA(Glu) + L-glutamate + ATP = L-glutamyl-tRNA(Glu) + AMP + diphosphate. Functionally, catalyzes the attachment of glutamate to tRNA(Glu) in a two-step reaction: glutamate is first activated by ATP to form Glu-AMP and then transferred to the acceptor end of tRNA(Glu). The sequence is that of Glutamate--tRNA ligase from Vibrio vulnificus (strain YJ016).